Here is a 1429-residue protein sequence, read N- to C-terminus: uncharacterized protein (1429 aa).

2 disordered regions span residues 1–76 (MEGE…SGIE) and 103–130 (PAGAAESAQNANLISSKSENVPEPAGEK). The segment covering 14-29 (SHSTSVVSERASSSGV) has biased composition (low complexity). Positions 109 to 121 (SAQNANLISSKSE) are enriched in polar residues. The next 2 helical transmembrane spans lie at 197–217 (LTGQWWQSTSILLAVSILSWI) and 225–245 (FFILFFIIITGTIVYGSCMIS). In terms of domain architecture, SMP-LTD spans 266–471 (DYETMSWFNT…WPNMFDYDLS (206 aa)). C2 domains follow at residues 462–584 (WPNM…GDIY) and 738–858 (TPVD…DRSA). The tract at residues 899-932 (NTDNSSKQSSENVQSATDPTTPAKDNSTSNAETS) is disordered. In terms of domain architecture, C2 3 spans 1060–1177 (TYMPVPMTLN…EPNVESQQSI (118 aa)). Residues 1280–1303 (EKNPSRSDLTTTQEASSSASVPPA) are disordered. A compositionally biased stretch (low complexity) spans 1294–1303 (ASSSASVPPA).

It localises to the membrane. This is an uncharacterized protein from Schizosaccharomyces pombe (strain 972 / ATCC 24843) (Fission yeast).